Consider the following 179-residue polypeptide: Peptide deformylase (179 aa).

Fe cation contacts are provided by C103 and H145. The active site involves E146. Residue H149 participates in Fe cation binding.

Belongs to the polypeptide deformylase family. The cofactor is Fe(2+).

The enzyme catalyses N-terminal N-formyl-L-methionyl-[peptide] + H2O = N-terminal L-methionyl-[peptide] + formate. Its function is as follows. Removes the formyl group from the N-terminal Met of newly synthesized proteins. Requires at least a dipeptide for an efficient rate of reaction. N-terminal L-methionine is a prerequisite for activity but the enzyme has broad specificity at other positions. The chain is Peptide deformylase from Leptospira biflexa serovar Patoc (strain Patoc 1 / Ames).